The sequence spans 68 residues: Wasabi receptor toxin (68 aa).

The signal sequence occupies residues 1 to 21; the sequence is MKYFTLALTLLFLLLINPCKD. A propeptide spanning residues 22–35 is cleaved from the precursor; it reads MNFAWAESSEKVER. Cystine bridges form between cysteine 44/cysteine 62 and cysteine 48/cysteine 58.

It belongs to the short scorpion toxin superfamily. Potassium channel inhibitor kappa-KTx family. Kappa-KTx 1 subfamily. Monomer. Expressed by the venom gland.

The protein resides in the secreted. The protein localises to the host cytoplasm. Its function is as follows. Cell-penetrating peptide (CPP) with defensive purpose that induces pain by specifically activating mammalian sensory neuron TRPA1 channels. It non-covalently binds to the same region than other TRPA1 agonists (irritants), but acts via a distinct biochemical mechanism. Its binding stabilizes the TRPA1 open state and diminishes calcium-permeability. Consequently, it produces pain and pain hypersensitivity, but fails to trigger efferent release of neuropeptides (CGRP) and neurogenic inflammation typically produced by noxious electrophiles. Is not active on voltage-gated potassium channels and other TRP channels. The polypeptide is Wasabi receptor toxin (Urodacus manicatus (Black rock scorpion)).